Here is a 179-residue protein sequence, read N- to C-terminus: Transcription factor 21 (179 aa).

A disordered region spans residues 23-87 (IKLDPNKEFG…QVQRNAANAR (65 aa)). Residues 34-46 (SNDSNEESSTCDN) show a composition bias toward polar residues. Over residues 50–64 (KKGRGTSGKRRKAPS) the composition is skewed to basic residues. A compositionally biased stretch (polar residues) spans 70 to 80 (GNINQEGKQVQ). Residues 79-131 (VQRNAANARERARMRVLSKAFSRLKTTLPWVPPDTKLSKLDTLRLASSYIAHL) enclose the bHLH domain.

Efficient DNA binding requires dimerization with another bHLH protein.

The protein resides in the nucleus. Involved in epithelial-mesenchymal interactions in kidney and lung morphogenesis that include epithelial differentiation and branching morphogenesis. The chain is Transcription factor 21 (tcf21) from Xenopus tropicalis (Western clawed frog).